Consider the following 198-residue polypeptide: Ribosomal RNA small subunit methyltransferase G (198 aa).

S-adenosyl-L-methionine is bound by residues Gly74, Phe79, 123–124, and Arg136; that span reads IQ.

Belongs to the methyltransferase superfamily. RNA methyltransferase RsmG family.

Its subcellular location is the cytoplasm. It carries out the reaction guanosine(527) in 16S rRNA + S-adenosyl-L-methionine = N(7)-methylguanosine(527) in 16S rRNA + S-adenosyl-L-homocysteine. Its function is as follows. Specifically methylates the N7 position of guanine in position 527 of 16S rRNA. This chain is Ribosomal RNA small subunit methyltransferase G, found in Orientia tsutsugamushi (strain Ikeda) (Rickettsia tsutsugamushi).